Here is a 299-residue protein sequence, read N- to C-terminus: GTPase Era (299 aa).

The Era-type G domain maps to 5-172 (KSGFVSIIGR…IDVLKSFLPE (168 aa)). The G1 stretch occupies residues 13-20 (GRPNVGKS). Residue 13–20 (GRPNVGKS) coordinates GTP. The tract at residues 39–43 (QTTRN) is G2. The tract at residues 60–63 (DTPG) is G3. Residues 60 to 64 (DTPGI) and 122 to 125 (NKID) each bind GTP. Residues 122–125 (NKID) form a G4 region. Residues 151 to 153 (ISA) are G5. The 78-residue stretch at 203-280 (TSEEIPHAIG…YLELWVKVQR (78 aa)) folds into the KH type-2 domain.

This sequence belongs to the TRAFAC class TrmE-Era-EngA-EngB-Septin-like GTPase superfamily. Era GTPase family. As to quaternary structure, monomer.

Its subcellular location is the cytoplasm. It is found in the cell membrane. In terms of biological role, an essential GTPase that binds both GDP and GTP, with rapid nucleotide exchange. Plays a role in 16S rRNA processing and 30S ribosomal subunit biogenesis and possibly also in cell cycle regulation and energy metabolism. This Staphylococcus epidermidis (strain ATCC 12228 / FDA PCI 1200) protein is GTPase Era.